We begin with the raw amino-acid sequence, 245 residues long: 1-(5-phosphoribosyl)-5-[(5-phosphoribosylamino)methylideneamino] imidazole-4-carboxamide isomerase (245 aa).

Asp-8 functions as the Proton acceptor in the catalytic mechanism. Asp-130 functions as the Proton donor in the catalytic mechanism.

This sequence belongs to the HisA/HisF family.

Its subcellular location is the cytoplasm. The enzyme catalyses 1-(5-phospho-beta-D-ribosyl)-5-[(5-phospho-beta-D-ribosylamino)methylideneamino]imidazole-4-carboxamide = 5-[(5-phospho-1-deoxy-D-ribulos-1-ylimino)methylamino]-1-(5-phospho-beta-D-ribosyl)imidazole-4-carboxamide. The protein operates within amino-acid biosynthesis; L-histidine biosynthesis; L-histidine from 5-phospho-alpha-D-ribose 1-diphosphate: step 4/9. This Pseudomonas fluorescens (strain ATCC BAA-477 / NRRL B-23932 / Pf-5) protein is 1-(5-phosphoribosyl)-5-[(5-phosphoribosylamino)methylideneamino] imidazole-4-carboxamide isomerase.